Here is a 70-residue protein sequence, read N- to C-terminus: Large ribosomal subunit protein bL31 (70 aa).

Zn(2+)-binding residues include Cys16, Cys18, Cys37, and Cys40.

This sequence belongs to the bacterial ribosomal protein bL31 family. Type A subfamily. In terms of assembly, part of the 50S ribosomal subunit. The cofactor is Zn(2+).

In terms of biological role, binds the 23S rRNA. This chain is Large ribosomal subunit protein bL31, found in Glaesserella parasuis serovar 5 (strain SH0165) (Haemophilus parasuis).